The sequence spans 403 residues: Putative F-box/LRR-repeat protein At5g38386 (403 aa).

In terms of domain architecture, F-box spans 1 to 47; the sequence is MDHLSNLPDELLCHIMSFLTTKEAALISVLSKRWRNLIAFVPNLDIF. 6 LRR repeats span residues 64–91, 93–119, 131–156, 175–203, 243–274, and 275–300; these read IRQLFMDFVDRVLALQGNSPLKKFSLCC, GGSYSDRVDCWIQNVMVRGVSELDLSM, VFENKKLNFEIFLRALPALEELVMNH, LKTLTIKCIVCLHTKSFDTPSLAYLSYSD, YLYFSRDTLEVLSLCCESMPVFKNLKSLSIKS, and VESRGWQAMPVLLRNCPHLETLVLEA.

The protein is Putative F-box/LRR-repeat protein At5g38386 of Arabidopsis thaliana (Mouse-ear cress).